The primary structure comprises 358 residues: Oligopeptide transport ATP-binding protein OppD (358 aa).

Residues 8–259 form the ABC transporter domain; that stretch reads LEVKDLAISF…PRHPYTWGLL (252 aa). 44-51 contacts ATP; it reads GESGSGKS.

The protein belongs to the ABC transporter superfamily. The complex is composed of two ATP-binding proteins (OppD and OppF), two transmembrane proteins (OppB and OppC) and a solute-binding protein (OppA).

Its subcellular location is the cell membrane. It catalyses the reaction a [peptide](out) + ATP + H2O = a [peptide](in) + ADP + phosphate + H(+). In terms of biological role, part of the ABC transporter complex OppABCDF involved in the uptake of oligopeptides. Probably responsible for energy coupling to the transport system. Required for sporulation and genetic competence. The sequence is that of Oligopeptide transport ATP-binding protein OppD from Bacillus subtilis (strain 168).